The sequence spans 180 residues: ATP synthase subunit delta (180 aa).

The protein belongs to the ATPase delta chain family. As to quaternary structure, F-type ATPases have 2 components, F(1) - the catalytic core - and F(0) - the membrane proton channel. F(1) has five subunits: alpha(3), beta(3), gamma(1), delta(1), epsilon(1). CF(0) has four main subunits: a(1), b(1), b'(1) and c(10-14). The alpha and beta chains form an alternating ring which encloses part of the gamma chain. F(1) is attached to F(0) by a central stalk formed by the gamma and epsilon chains, while a peripheral stalk is formed by the delta, b and b' chains.

The protein resides in the cellular thylakoid membrane. F(1)F(0) ATP synthase produces ATP from ADP in the presence of a proton or sodium gradient. F-type ATPases consist of two structural domains, F(1) containing the extramembraneous catalytic core and F(0) containing the membrane proton channel, linked together by a central stalk and a peripheral stalk. During catalysis, ATP synthesis in the catalytic domain of F(1) is coupled via a rotary mechanism of the central stalk subunits to proton translocation. In terms of biological role, this protein is part of the stalk that links CF(0) to CF(1). It either transmits conformational changes from CF(0) to CF(1) or is implicated in proton conduction. This chain is ATP synthase subunit delta, found in Synechococcus elongatus (strain ATCC 33912 / PCC 7942 / FACHB-805) (Anacystis nidulans R2).